Reading from the N-terminus, the 528-residue chain is Phosphoenolpyruvate carboxykinase (ATP) (528 aa).

Substrate-binding residues include Arg56, Tyr192, and Lys198. ATP-binding positions include Lys198, His217, and 233–241 (GLSGTGKTT). Mn(2+) contacts are provided by Lys198 and His217. Asp254 contacts Mn(2+). Positions 282, 319, and 444 each coordinate ATP. Residue Arg319 coordinates substrate.

Belongs to the phosphoenolpyruvate carboxykinase (ATP) family. It depends on Mn(2+) as a cofactor.

The protein localises to the cytoplasm. The catalysed reaction is oxaloacetate + ATP = phosphoenolpyruvate + ADP + CO2. Its pathway is carbohydrate biosynthesis; gluconeogenesis. Functionally, involved in the gluconeogenesis. Catalyzes the conversion of oxaloacetate (OAA) to phosphoenolpyruvate (PEP) through direct phosphoryl transfer between the nucleoside triphosphate and OAA. This chain is Phosphoenolpyruvate carboxykinase (ATP), found in Bacillus cytotoxicus (strain DSM 22905 / CIP 110041 / 391-98 / NVH 391-98).